Consider the following 381-residue polypeptide: Sulfofructose kinase (381 aa).

ATP contacts are provided by residues glycine 10, 72 to 73, and 100 to 103; these read RY and GNGT. Residue asparagine 101 coordinates Mg(2+). Aspartate 131 acts as the Proton acceptor in catalysis.

It belongs to the phosphofructokinase type A (PFKA) family. The cofactor is Mg(2+).

It catalyses the reaction 6-deoxy-6-sulfo-D-fructose + ATP = 6-deoxy-6-sulfo-D-fructose 1-phosphate + ADP + H(+). Its function is as follows. Part of the sulfo-EMP2 pathway, a D-sulfoquinovose degradation pathway that produces sulfolactate (SL). Phosphorylates 6-deoxy-6-sulfo-D-fructose (SF) to 6-deoxy-6-sulfo-D-fructose 1-phosphate (SFP). The protein is Sulfofructose kinase of Alkalicoccus urumqiensis (Bacillus urumqiensis).